We begin with the raw amino-acid sequence, 192 residues long: MLPLLLASSSTYRRELLSRLRLPFVCSSPDIDESHRPDESAIELVKRLAEQKARALADSHPAHLIIGSDQVAVLGERIIGKPHTFENAREQLMAASGASVTFLTGLALLNSQTGHCQVDCVPFTVHMRVLDQARVERYLRAEQPYDCAGSFKAEGLGVSLFQSTEGPDATSLIGLPLIRLIDMLLAEGVQIP.

Residue Asp-69 is the Proton acceptor of the active site.

The protein belongs to the Maf family. YceF subfamily. A divalent metal cation serves as cofactor.

The protein localises to the cytoplasm. It catalyses the reaction N(7)-methyl-GTP + H2O = N(7)-methyl-GMP + diphosphate + H(+). In terms of biological role, nucleoside triphosphate pyrophosphatase that hydrolyzes 7-methyl-GTP (m(7)GTP). May have a dual role in cell division arrest and in preventing the incorporation of modified nucleotides into cellular nucleic acids. In Pseudomonas fluorescens (strain Pf0-1), this protein is 7-methyl-GTP pyrophosphatase.